Consider the following 1181-residue polypeptide: 1-phosphatidylinositol 4,5-bisphosphate phosphodiesterase beta-2 (1181 aa).

In terms of domain architecture, PI-PLC X-box spans 312–463; the sequence is QDMTQPLNHY…LRGKILIKNK (152 aa). The active site involves His327. The Ca(2+) site is built by Asn328, Glu357, and Asp359. His374 is a catalytic residue. Residue Glu408 coordinates Ca(2+). Positions 465–534 are disordered; it reads NQFSGPASPS…EEIKKMQSDE (70 aa). The span at 503-525 shows a compositional bias: acidic residues; it reads TEVEEEEVVEEEEEEESGNLDEE. Positions 547 to 663 constitute a PI-PLC Y-box domain; it reads MSSLVNYIQP…GYLLKHEFMR (117 aa). The 126-residue stretch at 666–791 folds into the C2 domain; sequence DKQFNPFSVD…CLRSESNMAL (126 aa). The segment at 847–890 is disordered; that stretch reads SGTPVASQSNGAPVSAGNGSTAPGTKATGEEATKEVTEPQTASL. The span at 850 to 869 shows a compositional bias: polar residues; it reads PVASQSNGAPVSAGNGSTAP. Residues 874 to 883 are compositionally biased toward basic and acidic residues; sequence TGEEATKEVT. Positions 893-940 form a coiled coil; it reads LRELKGVVKLQRRHEKELRELERRGARRWEELLQRGAAQLAELQTQAA. Ser950 carries the phosphoserine modification. 2 coiled-coil regions span residues 974 to 1026 and 1075 to 1141; these read PRVQ…AELK and HIQE…VRAY. The tract at residues 1149–1181 is disordered; sequence EAEDKPERSCEASEESCPQEPLVSKADTQESRL. The segment covering 1150–1159 has biased composition (basic and acidic residues); it reads AEDKPERSCE.

As to quaternary structure, interacts with RAC1. Forms a complex composed of at least WDR26, a G-beta:gamma unit, and PLCB2. Ca(2+) is required as a cofactor.

It catalyses the reaction a 1,2-diacyl-sn-glycero-3-phospho-(1D-myo-inositol-4,5-bisphosphate) + H2O = 1D-myo-inositol 1,4,5-trisphosphate + a 1,2-diacyl-sn-glycerol + H(+). The enzyme catalyses a 1,2-diacyl-sn-glycero-3-phospho-(1D-myo-inositol) + H2O = 1D-myo-inositol 1-phosphate + a 1,2-diacyl-sn-glycerol + H(+). Functionally, the production of the second messenger molecules diacylglycerol (DAG) and inositol 1,4,5-trisphosphate (IP3) is mediated by activated phosphatidylinositol-specific phospholipase C enzymes. In neutrophils, participates in a phospholipase C-activating N-formyl peptide-activated GPCR (G protein-coupled receptor) signaling pathway by promoting RASGRP4 activation by DAG, to promote neutrophil functional responses. In Mus musculus (Mouse), this protein is 1-phosphatidylinositol 4,5-bisphosphate phosphodiesterase beta-2.